Here is a 375-residue protein sequence, read N- to C-terminus: MKIWLLLGLLLMHEALEDVTGQHPPKNKRPKEPGENRIKPTNKKVKPKIPKIKDRDSADPTPKTQSIMTQMMDKGRFQKPAATLSLVAGQTLELRCKGNKIGWSYPAYLDTFKDTRLSVKQHERYGQLTLVNSTAADTGEFSCWGQLCTGYVCRRDEAKTGSTYIFFTEKGELFVPSPSHFDVVYLNPDRQAVVPCRVTVLSAKVTLHREFPAKEIPANGTDIVYDLKRGFVYLQPHVGHQGVVYCKAEAGGKSQISVKYQLLYAEVPRGPPSTTILASSNKVKGGDDVSVLCTVLGEPDVEVEFRWTYPGQKDERPVTIQDSWRLIHRGLGHTTRISQSVLSIEDFETIDAGYYICTAQNLQGQTTVATTVESS.

The N-terminal stretch at 1-21 (MKIWLLLGLLLMHEALEDVTG) is a signal peptide. Residues 20–64 (TGQHPPKNKRPKEPGENRIKPTNKKVKPKIPKIKDRDSADPTPKT) form a disordered region. Residues 40-50 (PTNKKVKPKIP) show a composition bias toward basic residues. Residues 62 to 159 (PKTQSIMTQM…GYVCRRDEAK (98 aa)) enclose the Ig-like C2-type 1 domain. A disulfide bond links cysteine 96 and cysteine 143. Residues asparagine 132 and asparagine 219 are each glycosylated (N-linked (GlcNAc...) asparagine). The Ig-like C2-type 2 domain maps to 272-373 (PSTTILASSN…GQTTVATTVE (102 aa)). Residues cysteine 293 and cysteine 357 are joined by a disulfide bond.

Forms a complex composed of PDGFRL, TNK2 and GRB2.

Its subcellular location is the secreted. The protein is Platelet-derived growth factor receptor-like protein (PDGFRL) of Bos taurus (Bovine).